A 75-amino-acid chain; its full sequence is Small ribosomal subunit protein eS28 (75 aa).

Belongs to the eukaryotic ribosomal protein eS28 family.

This chain is Small ribosomal subunit protein eS28, found in Natronomonas pharaonis (strain ATCC 35678 / DSM 2160 / CIP 103997 / JCM 8858 / NBRC 14720 / NCIMB 2260 / Gabara) (Halobacterium pharaonis).